The following is a 250-amino-acid chain: Hydroxyacylglutathione hydrolase (250 aa).

The Zn(2+) site is built by histidine 53, histidine 55, aspartate 57, histidine 58, histidine 111, aspartate 128, and histidine 166.

Belongs to the metallo-beta-lactamase superfamily. Glyoxalase II family. In terms of assembly, monomer. Requires Zn(2+) as cofactor.

It catalyses the reaction an S-(2-hydroxyacyl)glutathione + H2O = a 2-hydroxy carboxylate + glutathione + H(+). The protein operates within secondary metabolite metabolism; methylglyoxal degradation; (R)-lactate from methylglyoxal: step 2/2. In terms of biological role, thiolesterase that catalyzes the hydrolysis of S-D-lactoyl-glutathione to form glutathione and D-lactic acid. The sequence is that of Hydroxyacylglutathione hydrolase from Methylobacillus flagellatus (strain ATCC 51484 / DSM 6875 / VKM B-1610 / KT).